The following is a 502-amino-acid chain: High affinity nitrate transporter 2.5 (502 aa).

12 helical membrane passes run 51–71, 87–107, 111–131, 133–153, 172–192, 208–228, 264–284, 300–320, 334–354, 361–381, 393–413, and 423–443; these read WFQF…LPVI, IASV…CDLF, LASA…AGIK, PIGF…FVST, IAAG…PIVF, IAFF…LLFG, WITA…DNII, GIIA…GGIF, LWAW…LGQI, IIVM…TFGV, VSGM…LIFF, and GITL…LIYF. A disordered region spans residues 477 to 502; it reads LHIGSQKFAETSISERGRATTTHPQT.

This sequence belongs to the major facilitator superfamily. Nitrate/nitrite porter (TC 2.A.1.8) family. Oligomeric molecular complex with NRT3.1. Expressed in roots, shoots and seeds. Expressed in leaves. Expressed in root hair zone of the primary root and the lateral roots, but not in the lateral root tip or in older parts of the roots. Detected mainly in the epidermis and the cortex. Expressed in shoots only in higher-order veins.

The protein localises to the cell membrane. Nitrate transporter involved in the constitutive high-affinity transport system (cHATS) under long-term N starvation conditions. Predominantly expressed in roots of nitrate-deprived plants as a 150 kDa molecular complex with NRT3.1 representing the major contributor to cHATS influx. The principal role of this cHATS is to enable roots previously deprived of nitrate to absorb this ion and initiate induction of nitrate-inducible genes. Not involved in transfer of nitrate from roots to shoots. Contributes to phloem loading of nitrate in shoots during N starvation, but not required for growth and nitrate uptake in young plants. Required for the nitrate uptake-independent plant growth promotion and lateral root response to the rhizospheric Phyllobacterium. Might be involved in the transfer of nitrate from stored pools to cytoplasm. The polypeptide is High affinity nitrate transporter 2.5 (NRT2.5) (Arabidopsis thaliana (Mouse-ear cress)).